We begin with the raw amino-acid sequence, 200 residues long: Dual specificity tyrosine-phosphorylation-regulated kinase 1A (200 aa).

A Phosphotyrosine; by autocatalysis modification is found at tyrosine 41. Lysine 58 contacts ATP. Tyrosine 76 bears the Phosphotyrosine; by autocatalysis mark. Serine 88 is subject to Phosphoserine; by autocatalysis. Residue threonine 122 is modified to Phosphothreonine; by autocatalysis.

The protein belongs to the protein kinase superfamily. CMGC Ser/Thr protein kinase family. MNB/DYRK subfamily. Interacts with RAD54L2/ARIP4. Interacts with CRY2. Interacts with RANBP9. Interacts with WDR68. Interacts with SIRT1. Post-translationally, can also autophosphorylate on serine and threonine residues (in vitro). Autophosphorylated on numerous tyrosine residues.

It localises to the nucleus. It carries out the reaction L-tyrosyl-[protein] + ATP = O-phospho-L-tyrosyl-[protein] + ADP + H(+). The enzyme catalyses L-seryl-[protein] + ATP = O-phospho-L-seryl-[protein] + ADP + H(+). It catalyses the reaction L-threonyl-[protein] + ATP = O-phospho-L-threonyl-[protein] + ADP + H(+). The catalysed reaction is [DNA-directed RNA polymerase] + ATP = phospho-[DNA-directed RNA polymerase] + ADP + H(+). With respect to regulation, inhibited by RANBP9. Its function is as follows. Dual-specificity kinase which possesses both serine/threonine and tyrosine kinase activities. Exhibits a substrate preference for proline at position P+1 and arginine at position P-3. Plays an important role in double-strand breaks (DSBs) repair following DNA damage. Mechanistically, phosphorylates RNF169 and increases its ability to block accumulation of TP53BP1 at the DSB sites thereby promoting homologous recombination repair (HRR). Also acts as a positive regulator of transcription by acting as a CTD kinase that mediates phosphorylation of the CTD (C-terminal domain) of the large subunit of RNA polymerase II (RNAP II) POLR2A. May play a role in a signaling pathway regulating nuclear functions of cell proliferation. Modulates alternative splicing by phosphorylating the splice factor SRSF6. Has pro-survival function and negatively regulates the apoptotic process. Promotes cell survival upon genotoxic stress through phosphorylation of SIRT1. This in turn inhibits p53/TP53 activity and apoptosis. Phosphorylates SEPTIN4, SEPTIN5 and SF3B1 at 'Thr-434'. In Oryctolagus cuniculus (Rabbit), this protein is Dual specificity tyrosine-phosphorylation-regulated kinase 1A.